The primary structure comprises 167 residues: uncharacterized protein (167 aa).

The segment at 1–21 (MFDFSFPTPASAGTRMGPASC) is disordered.

This is an uncharacterized protein from Homo sapiens (Human).